The chain runs to 721 residues: Polyribonucleotide nucleotidyltransferase (721 aa).

Residues D495 and D501 each contribute to the Mg(2+) site. The region spanning 562 to 621 is the KH domain; the sequence is PRLLSFRIDPELIGTVIGPGGRTIKGITERTNTKIDIEDGGIVTIASHDGAAAEEAQKII. In terms of domain architecture, S1 motif spans 631-699; it reads GEIFTGVVTR…SRGRINLTLR (69 aa). The tract at residues 702 to 721 is disordered; sequence SQNSGMSYPEPTPTPVAPLN. Pro residues predominate over residues 711–721; the sequence is EPTPTPVAPLN.

The protein belongs to the polyribonucleotide nucleotidyltransferase family. Mg(2+) serves as cofactor.

It is found in the cytoplasm. It catalyses the reaction RNA(n+1) + phosphate = RNA(n) + a ribonucleoside 5'-diphosphate. Involved in mRNA degradation. Catalyzes the phosphorolysis of single-stranded polyribonucleotides processively in the 3'- to 5'-direction. This Prochlorococcus marinus (strain MIT 9312) protein is Polyribonucleotide nucleotidyltransferase.